The chain runs to 415 residues: NAD-dependent protein deacetylase hst4 (415 aa).

Positions 1–26 are disordered; it reads MKVEEHVPLIQESRKRKCQSSENASK. In terms of domain architecture, Deacetylase sirtuin-type spans 40 to 337; the sequence is TGNENVDLSP…RRLKPLLDAP (298 aa). Residues 65-84 and 153-156 each bind NAD(+); these read GAGI…EGLF and QNID. His-184 serves as the catalytic Proton acceptor. Positions 192, 195, 214, and 217 each coordinate Zn(2+). Residues 273 to 275, 303 to 305, and Leu-323 contribute to the NAD(+) site; these read GTS and NYD.

Belongs to the sirtuin family. Class I subfamily. It depends on Zn(2+) as a cofactor.

It localises to the nucleus. The protein localises to the nucleolus. It carries out the reaction N(6)-acetyl-L-lysyl-[protein] + NAD(+) + H2O = 2''-O-acetyl-ADP-D-ribose + nicotinamide + L-lysyl-[protein]. Functionally, NAD-dependent histone deacetylase, which contributes to both telomeric and centromeric silencing, proper cell cycle progression, DNA damage control, recombination, and genomic maintenance. This is NAD-dependent protein deacetylase hst4 (hst4) from Schizosaccharomyces pombe (strain 972 / ATCC 24843) (Fission yeast).